The chain runs to 105 residues: Probable tetrachloroethene reductive dehalogenase membrane anchor protein (105 aa).

The next 3 membrane-spanning stretches (helical) occupy residues 3–23, 35–55, and 66–86; these read IYDVLIWMALGMTALLIQYGI, IPLQICGFLANFFFIFALAWG, and AIGMGFIFFGGTALIPAIITY.

The protein belongs to the PceB family.

Its subcellular location is the cell membrane. May act as a membrane anchor for the tetrachloroethene reductive dehalogenase PceA. The protein is Probable tetrachloroethene reductive dehalogenase membrane anchor protein of Desulfitobacterium hafniense (Desulfitobacterium frappieri).